The primary structure comprises 212 residues: Transcriptional regulator GfcR (212 aa).

Belongs to the purine/pyrimidine phosphoribosyltransferase family. GfcR subfamily.

DNA-binding transcriptional regulator that functions as a regulator of central sugar catabolic pathways. The sequence is that of Transcriptional regulator GfcR from Halobacterium salinarum (strain ATCC 29341 / DSM 671 / R1).